A 63-amino-acid polypeptide reads, in one-letter code: Translational regulator CsrA (63 aa).

The protein belongs to the CsrA/RsmA family. Homodimer; the beta-strands of each monomer intercalate to form a hydrophobic core, while the alpha-helices form wings that extend away from the core.

Its subcellular location is the cytoplasm. Its function is as follows. A key translational regulator that binds mRNA to regulate translation initiation and/or mRNA stability. Mediates global changes in gene expression, shifting from rapid growth to stress survival by linking envelope stress, the stringent response and the catabolite repression systems. Usually binds in the 5'-UTR; binding at or near the Shine-Dalgarno sequence prevents ribosome-binding, repressing translation, binding elsewhere in the 5'-UTR can activate translation and/or stabilize the mRNA. Its function is antagonized by small RNA(s). The chain is Translational regulator CsrA from Haemophilus influenzae (strain PittEE).